The primary structure comprises 495 residues: Glucose-6-phosphate 1-dehydrogenase (495 aa).

K51 is covalently cross-linked (Isoglutamyl lysine isopeptide (Lys-Gln) (interchain with Q-Cter in protein Pup)). NADP(+) contacts are provided by residues 94–95 (DL) and K154. H184, K188, E222, and D241 together coordinate substrate. The active-site Proton acceptor is the H246. A substrate-binding site is contributed by K345.

This sequence belongs to the glucose-6-phosphate dehydrogenase family.

It catalyses the reaction D-glucose 6-phosphate + NADP(+) = 6-phospho-D-glucono-1,5-lactone + NADPH + H(+). It participates in carbohydrate degradation; pentose phosphate pathway; D-ribulose 5-phosphate from D-glucose 6-phosphate (oxidative stage): step 1/3. In terms of biological role, catalyzes the oxidation of glucose 6-phosphate to 6-phosphogluconolactone. This is Glucose-6-phosphate 1-dehydrogenase from Mycolicibacterium smegmatis (strain ATCC 700084 / mc(2)155) (Mycobacterium smegmatis).